The primary structure comprises 478 residues: Putative UDP-glucose flavonoid 3-O-glucosyltransferase 3 (478 aa).

This sequence belongs to the UDP-glycosyltransferase family.

This Fragaria ananassa (Strawberry) protein is Putative UDP-glucose flavonoid 3-O-glucosyltransferase 3.